Here is a 65-residue protein sequence, read N- to C-terminus: Putative beta-neurotoxin RjAa4 (65 aa).

The region spanning 1 to 64 (KEGYPMGRDG…VWDSSTNKCG (64 aa)) is the LCN-type CS-alpha/beta domain. 4 disulfides stabilise this stretch: Cys-11/Cys-63, Cys-15/Cys-37, Cys-22/Cys-44, and Cys-26/Cys-46.

It belongs to the long (4 C-C) scorpion toxin superfamily. Sodium channel inhibitor family. Beta subfamily. Expressed by the venom gland.

It localises to the secreted. In terms of biological role, beta toxins bind voltage-independently at site-4 of sodium channels (Nav) and shift the voltage of activation toward more negative potentials thereby affecting sodium channel activation and promoting spontaneous and repetitive firing. The protein is Putative beta-neurotoxin RjAa4 of Rhopalurus junceus (Caribbean blue scorpion).